Consider the following 269-residue polypeptide: 4-hydroxy-tetrahydrodipicolinate reductase (269 aa).

NAD(+) is bound by residues 9–14 (GAGGRM) and E35. R36 is a binding site for NADP(+). Residues 98-100 (GTT) and 122-125 (ASNY) contribute to the NAD(+) site. H155 acts as the Proton donor/acceptor in catalysis. Residue H156 coordinates (S)-2,3,4,5-tetrahydrodipicolinate. The Proton donor role is filled by K159. 165–166 (GT) contacts (S)-2,3,4,5-tetrahydrodipicolinate.

It belongs to the DapB family.

It localises to the cytoplasm. The catalysed reaction is (S)-2,3,4,5-tetrahydrodipicolinate + NAD(+) + H2O = (2S,4S)-4-hydroxy-2,3,4,5-tetrahydrodipicolinate + NADH + H(+). The enzyme catalyses (S)-2,3,4,5-tetrahydrodipicolinate + NADP(+) + H2O = (2S,4S)-4-hydroxy-2,3,4,5-tetrahydrodipicolinate + NADPH + H(+). It functions in the pathway amino-acid biosynthesis; L-lysine biosynthesis via DAP pathway; (S)-tetrahydrodipicolinate from L-aspartate: step 4/4. Functionally, catalyzes the conversion of 4-hydroxy-tetrahydrodipicolinate (HTPA) to tetrahydrodipicolinate. The sequence is that of 4-hydroxy-tetrahydrodipicolinate reductase from Actinobacillus pleuropneumoniae serotype 7 (strain AP76).